The sequence spans 351 residues: LETM1 domain-containing protein 1 (351 aa).

At 1-130 (MLSGMALCRT…FRRDIIKAAP (130 aa)) the chain is on the cytoplasmic side. A helical membrane pass occupies residues 131-151 (VVIISIPPFANYLVFVLMYFF). Residues 152-351 (PRQLLIRHFW…SANYLQSIKQ (200 aa)) lie on the Mitochondrial intermembrane side of the membrane. Positions 172–351 (IYHRMRVEAY…SANYLQSIKQ (180 aa)) constitute a Letm1 RBD domain.

It localises to the mitochondrion outer membrane. The protein localises to the nucleus. The protein resides in the mitochondrion inner membrane. In terms of biological role, may play an essential role for mitochondrial structure and function. This chain is LETM1 domain-containing protein 1, found in Xenopus tropicalis (Western clawed frog).